Here is a 211-residue protein sequence, read N- to C-terminus: Thiamine-phosphate synthase (211 aa).

4-amino-2-methyl-5-(diphosphooxymethyl)pyrimidine-binding positions include 36–40 and Asn-68; that span reads QLREK. Residues Asp-69 and Asp-88 each contribute to the Mg(2+) site. Ser-107 lines the 4-amino-2-methyl-5-(diphosphooxymethyl)pyrimidine pocket. 133–135 lines the 2-[(2R,5Z)-2-carboxy-4-methylthiazol-5(2H)-ylidene]ethyl phosphate pocket; it reads TGS. Lys-136 is a 4-amino-2-methyl-5-(diphosphooxymethyl)pyrimidine binding site. 2-[(2R,5Z)-2-carboxy-4-methylthiazol-5(2H)-ylidene]ethyl phosphate contacts are provided by residues Gly-167 and 187 to 188; that span reads IT.

The protein belongs to the thiamine-phosphate synthase family. Mg(2+) is required as a cofactor.

It carries out the reaction 2-[(2R,5Z)-2-carboxy-4-methylthiazol-5(2H)-ylidene]ethyl phosphate + 4-amino-2-methyl-5-(diphosphooxymethyl)pyrimidine + 2 H(+) = thiamine phosphate + CO2 + diphosphate. It catalyses the reaction 2-(2-carboxy-4-methylthiazol-5-yl)ethyl phosphate + 4-amino-2-methyl-5-(diphosphooxymethyl)pyrimidine + 2 H(+) = thiamine phosphate + CO2 + diphosphate. The catalysed reaction is 4-methyl-5-(2-phosphooxyethyl)-thiazole + 4-amino-2-methyl-5-(diphosphooxymethyl)pyrimidine + H(+) = thiamine phosphate + diphosphate. The protein operates within cofactor biosynthesis; thiamine diphosphate biosynthesis; thiamine phosphate from 4-amino-2-methyl-5-diphosphomethylpyrimidine and 4-methyl-5-(2-phosphoethyl)-thiazole: step 1/1. In terms of biological role, condenses 4-methyl-5-(beta-hydroxyethyl)thiazole monophosphate (THZ-P) and 2-methyl-4-amino-5-hydroxymethyl pyrimidine pyrophosphate (HMP-PP) to form thiamine monophosphate (TMP). This is Thiamine-phosphate synthase from Haloarcula marismortui (strain ATCC 43049 / DSM 3752 / JCM 8966 / VKM B-1809) (Halobacterium marismortui).